Reading from the N-terminus, the 372-residue chain is Cytochrome b (372 aa).

4 helical membrane-spanning segments follow: residues 25 to 45 (FGSM…FLAI), 69 to 90 (WTMQ…YIHI), 105 to 125 (WLSG…GYVL), and 170 to 190 (FFAL…IHII). The heme b site is built by His75 and His89. Heme b-binding residues include His174 and His188. His193 contributes to the a ubiquinone binding site. 4 helical membrane passes run 218 to 238 (YKDM…LSFS), 280 to 300 (LGGT…PFTH), 312 to 332 (LTQI…WTAT), and 339 to 358 (FIII…IMNP).

This sequence belongs to the cytochrome b family. As to quaternary structure, the cytochrome bc1 complex contains 3 respiratory subunits (MT-CYB, CYC1 and UQCRFS1), 2 core proteins (UQCRC1 and UQCRC2) and probably 6 low-molecular weight proteins. Requires heme b as cofactor.

The protein localises to the mitochondrion inner membrane. In terms of biological role, component of the ubiquinol-cytochrome c reductase complex (complex III or cytochrome b-c1 complex) that is part of the mitochondrial respiratory chain. The b-c1 complex mediates electron transfer from ubiquinol to cytochrome c. Contributes to the generation of a proton gradient across the mitochondrial membrane that is then used for ATP synthesis. The protein is Cytochrome b (MT-CYB) of Ophiophagus hannah (King cobra).